We begin with the raw amino-acid sequence, 106 residues long: Large ribosomal subunit protein uL24 (106 aa).

It belongs to the universal ribosomal protein uL24 family. Part of the 50S ribosomal subunit.

One of two assembly initiator proteins, it binds directly to the 5'-end of the 23S rRNA, where it nucleates assembly of the 50S subunit. Functionally, one of the proteins that surrounds the polypeptide exit tunnel on the outside of the subunit. In Acinetobacter baylyi (strain ATCC 33305 / BD413 / ADP1), this protein is Large ribosomal subunit protein uL24.